The chain runs to 102 residues: Small ribosomal subunit protein uS10 (102 aa).

Belongs to the universal ribosomal protein uS10 family. As to quaternary structure, part of the 30S ribosomal subunit.

Involved in the binding of tRNA to the ribosomes. This is Small ribosomal subunit protein uS10 from Clostridium novyi (strain NT).